Consider the following 505-residue polypeptide: Katanin p60 ATPase-containing subunit A-like 2 (505 aa).

Residues 25–57 (RRKNLLILIMHYLLQEGYVDSANSLEQETKISS) form the LisH domain. Disordered regions lie at residues 94–127 (LDHDSRVQPKPRSAGKLRRAGSNSTQGLPRIGQQ) and 140–167 (RTNGHQKALSRENSKQESGGNSPQEASE). Composition is skewed to polar residues over residues 114 to 127 (GSNSTQGLPRIGQQ) and 155 to 164 (QESGGNSPQE). 298 to 305 (GPPGTGKT) is an ATP binding site.

Belongs to the AAA ATPase family. Katanin p60 subunit A1 subfamily. A-like 2 sub-subfamily.

The protein resides in the cytoplasm. It localises to the cytoskeleton. Its subcellular location is the spindle. It is found in the spindle pole. It catalyses the reaction n ATP + n H2O + a microtubule = n ADP + n phosphate + (n+1) alpha/beta tubulin heterodimers.. In terms of biological role, severs microtubules in vitro in an ATP-dependent manner. This activity may promote rapid reorganization of cellular microtubule arrays. This chain is Katanin p60 ATPase-containing subunit A-like 2 (katnal2), found in Xenopus laevis (African clawed frog).